A 298-amino-acid chain; its full sequence is tRNA pseudouridine synthase A (298 aa).

Asp56 (nucleophile) is an active-site residue. Tyr125 contributes to the substrate binding site.

This sequence belongs to the tRNA pseudouridine synthase TruA family. In terms of assembly, homodimer.

It carries out the reaction uridine(38/39/40) in tRNA = pseudouridine(38/39/40) in tRNA. Its function is as follows. Formation of pseudouridine at positions 38, 39 and 40 in the anticodon stem and loop of transfer RNAs. This chain is tRNA pseudouridine synthase A, found in Bifidobacterium animalis subsp. lactis (strain AD011).